We begin with the raw amino-acid sequence, 81 residues long: U-poneritoxin(01)-Om6a (81 aa).

Positions 1–21 (MRRSYVLLAFAIVLIISIISA) are cleaved as a signal peptide. Residues 22–43 (QVEADASSDAFADAVADAVADP) constitute a propeptide that is removed on maturation. Ala79 bears the Alanine amide mark.

This sequence belongs to the formicidae venom precursor-01 superfamily. Post-translationally, truncated sequences of this peptide have also been found in the venom. It is possible they have been cleaved in the venom. Expressed by the venom gland.

The protein resides in the secreted. Cationic amphipathic alpha-helical peptide with antimicrobial activities against E.coli (MIC=3.1), and S.aureus (MIC=3.1 uM). Also shows histamine-releasing activity (33.6% at 10 uM). Does not have activity against S.cerevisiae. Does not show hemolytic activity, even at 50 uM. In Odontomachus monticola (Trap-jaw ant), this protein is U-poneritoxin(01)-Om6a.